Reading from the N-terminus, the 496-residue chain is Pyrrole-2-carboxylic acid decarboxylase (496 aa).

Trp166 provides a ligand contact to K(+). Positions 168, 170, 187, and 188 each coordinate prenylated FMN. Mn(2+) is bound at residue His188. Ala218, Ala219, Met221, and Glu229 together coordinate K(+). Glu229 is a prenylated FMN binding site. Glu229 lines the Mn(2+) pocket. Glu278 (proton donor) is an active-site residue. Position 386 (His386) interacts with prenylated FMN.

It belongs to the UbiD family. UbiD-like/FDC subfamily. As to quaternary structure, homodimer. Prenylated FMN is required as a cofactor. It depends on Mn(2+) as a cofactor. K(+) serves as cofactor.

The enzyme catalyses pyrrole-2-carboxylate + H(+) = 1H-pyrrole + CO2. It carries out the reaction pyrrole-2-carboxylate + H2O = 1H-pyrrole + hydrogencarbonate. Its activity is regulated as follows. Imidazole acts as a reversible inhibitor via the formation of an imidazole-prenyl-FMN adduct. Activity is light sensitive. In terms of biological role, catalyzes the prenyl-FMN-dependent decarboxylation of pyrrole-2-carboxylate (P2C). Can also catalyze the carboxylation of pyrrole in the presence of elevated concentrations of CO(2) or bicarbonate. Can accept a modest range of heteroaromatic compounds such as 3-methylpyrrole-2-carboxylate, indole-3-carboxylate and furan-2-carboxylate, and shows very low activity with thiophene-2-carboxylate. Attenuates the virulence of P.aeruginosa in a Drosophila model when overexpressed. This chain is Pyrrole-2-carboxylic acid decarboxylase, found in Pseudomonas aeruginosa (strain ATCC 15692 / DSM 22644 / CIP 104116 / JCM 14847 / LMG 12228 / 1C / PRS 101 / PAO1).